Here is a 158-residue protein sequence, read N- to C-terminus: NAD(P)H-quinone oxidoreductase subunit J, chloroplastic (158 aa).

This sequence belongs to the complex I 30 kDa subunit family. In terms of assembly, NDH is composed of at least 16 different subunits, 5 of which are encoded in the nucleus.

Its subcellular location is the plastid. The protein localises to the chloroplast thylakoid membrane. The enzyme catalyses a plastoquinone + NADH + (n+1) H(+)(in) = a plastoquinol + NAD(+) + n H(+)(out). It carries out the reaction a plastoquinone + NADPH + (n+1) H(+)(in) = a plastoquinol + NADP(+) + n H(+)(out). NDH shuttles electrons from NAD(P)H:plastoquinone, via FMN and iron-sulfur (Fe-S) centers, to quinones in the photosynthetic chain and possibly in a chloroplast respiratory chain. The immediate electron acceptor for the enzyme in this species is believed to be plastoquinone. Couples the redox reaction to proton translocation, and thus conserves the redox energy in a proton gradient. The chain is NAD(P)H-quinone oxidoreductase subunit J, chloroplastic from Lemna minor (Common duckweed).